The sequence spans 96 residues: NADH-ubiquinone oxidoreductase chain 4L (96 aa).

3 consecutive transmembrane segments (helical) span residues 2–22 (IMFLYSSFSMILFILGLFCFV), 28–48 (LLSMLLSLEFIVLILFFMLFI), and 62–82 (MFLTFSVCEGALGLSILVSMI).

This sequence belongs to the complex I subunit 4L family.

The protein localises to the mitochondrion membrane. The enzyme catalyses a ubiquinone + NADH + 5 H(+)(in) = a ubiquinol + NAD(+) + 4 H(+)(out). In terms of biological role, core subunit of the mitochondrial membrane respiratory chain NADH dehydrogenase (Complex I) that is believed to belong to the minimal assembly required for catalysis. Complex I functions in the transfer of electrons from NADH to the respiratory chain. The immediate electron acceptor for the enzyme is believed to be ubiquinone. The chain is NADH-ubiquinone oxidoreductase chain 4L (mt:ND4L) from Drosophila nasuta F (Fruit fly).